The chain runs to 255 residues: 14-3-3-like protein B (255 aa).

The protein belongs to the 14-3-3 family.

In Nicotiana tabacum (Common tobacco), this protein is 14-3-3-like protein B.